An 811-amino-acid chain; its full sequence is Lysine-specific histone demethylase 1 homolog 3 (811 aa).

The segment covering 1-10 (MSDQPPPYTP) has biased composition (pro residues). The tract at residues 1–79 (MSDQPPPYTP…PSAQPPPRAS (79 aa)) is disordered. The span at 44–55 (NKRKRTGFRRKL) shows a compositional bias: basic residues. Residues 56–71 (PSGSPAAPVAVAASPS) are compositionally biased toward low complexity. The SWIRM domain maps to 88–189 (NREPTAEAVT…FGVAPAIKER (102 aa)). FAD contacts are provided by E227, R229, R235, and E609. The disordered stretch occupies residues 790–811 (RNSSRTKTRPSKLKIGIPKSKS).

This sequence belongs to the flavin monoamine oxidase family. FAD is required as a cofactor.

Functionally, probable histone demethylase. The protein is Lysine-specific histone demethylase 1 homolog 3 of Oryza sativa subsp. indica (Rice).